An 837-amino-acid chain; its full sequence is Intestinal mucin-like protein (837 aa).

4 tandem repeats follow at residues 17–27 (PSTPSTPPPST), 28–38 (PTTPTSSQTTT), 39–50 (PSTPSTTSSKST), and 51–62 (PSTPQSTSSKST). Positions 17–70 (PSTPSTPPPSTPTTPTSSQTTTPSTPSTTSSKSTPSTPQSTSSKSTPSTPPKTT) are 5 X 11 AA approximate tandem repeats. Residues 17–75 (PSTPSTPPPSTPTTPTSSQTTTPSTPSTTSSKSTPSTPQSTSSKSTPSTPPKTTLPGCL) form a disordered region. The span at 29–70 (TTPTSSQTTTPSTPSTTSSKSTPSTPQSTSSKSTPSTPPKTT) shows a compositional bias: low complexity. The 5; truncated repeat unit spans residues 63–70 (PSTPPKTT). 2 N-linked (GlcNAc...) asparagine glycosylation sites follow: asparagine 91 and asparagine 164. In terms of domain architecture, VWFD spans 141-324 (CYCTGWGDPH…VNDPSKPHCP (184 aa)). 3 disulfides stabilise this stretch: cysteine 143–cysteine 284, cysteine 165–cysteine 323, and cysteine 189–cysteine 197. Residues 149-837 (PHFVTFDGLY…RSSPRLLGRK (689 aa)) form a probably important for disulfide-bond mediated mucin polymerization (link domain) region. Asparagine 278, asparagine 289, asparagine 344, asparagine 410, asparagine 444, asparagine 515, asparagine 538, asparagine 612, asparagine 627, asparagine 695, asparagine 727, and asparagine 749 each carry an N-linked (GlcNAc...) asparagine glycan. VWFC domains follow at residues 472 to 543 (CGCV…TSCK) and 581 to 648 (GVCV…KKCQ). 4 cysteine pairs are disulfide-bonded: cysteine 732-cysteine 779, cysteine 746-cysteine 793, cysteine 755-cysteine 809, and cysteine 759-cysteine 811. The CTCK domain occupies 732-817 (CSAIPVMKEI…SCLCQGTVCE (86 aa)).

Multimeric. Coats the epithelia of the intestines.

It localises to the secreted. The protein is Intestinal mucin-like protein of Rattus norvegicus (Rat).